A 2195-amino-acid polypeptide reads, in one-letter code: Genome polyprotein (2195 aa).

Residue Gly-2 is the site of N-myristoyl glycine; by host attachment. At 2-1505 the chain is on the cytoplasmic side; the sequence is GAQVSTQKTG…HVSRAFICLQ (1504 aa). The amphipathic alpha-helix stretch occupies residues 567 to 583; sequence LLQGDVVEAVENAVARV. Catalysis depends on for protease 2A activity residues His-882 and Asp-900. 2 residues coordinate Zn(2+): Cys-917 and Cys-919. Catalysis depends on Cys-971, which acts as the For protease 2A activity. 2 residues coordinate Zn(2+): Cys-977 and His-979. The segment at 1111–1183 is membrane-binding; the sequence is NNGWLKKFTE…EQSAPSQSDQ (73 aa). An oligomerization region spans residues 1111–1249; it reads NNGWLKKFTE…SPGAGKSVAT (139 aa). Residues 1132–1136 are RNA-binding; the sequence is SIKIQ. The 157-residue stretch at 1215 to 1371 folds into the SF3 helicase domain; it reads EKKMSNYIQF…SMYSQNGKIN (157 aa). Cys-1379, Cys-1391, and Cys-1396 together coordinate Zn(2+). The segment at 1379–1396 adopts a C4-type; degenerate zinc-finger fold; that stretch reads CDEECCPVNFKRCCPLVC. The RNA-binding stretch occupies residues 1423–1430; it reads EYNHRHSV. The oligomerization stretch occupies residues 1434–1439; the sequence is LEALFQ. An intramembrane segment occupies 1506-1521; sequence ALTTFVSVAGIIYIIY. The Cytoplasmic portion of the chain corresponds to 1522–2195; it reads KLFAGFQGAY…TLRRKWLDSF (674 aa). Tyr-1531 carries the O-(5'-phospho-RNA)-tyrosine modification. Residues 1551 to 1729 enclose the Peptidase C3 domain; sequence GPAFEFAVAM…FSAALLKHYF (179 aa). Catalysis depends on for protease 3C activity residues His-1590, Glu-1621, and Cys-1697. The region spanning 1960-2076 is the RdRp catalytic domain; that stretch reads GHLIAFDYSG…SYPWPIDASL (117 aa). Mg(2+) contacts are provided by Asp-1966 and Asp-2062.

This sequence belongs to the picornaviruses polyprotein family. In terms of assembly, interacts with capsid protein VP1 and capsid protein VP3 to form heterotrimeric protomers. Interacts with capsid protein VP0, and capsid protein VP3 to form heterotrimeric protomers. Five protomers subsequently associate to form pentamers which serve as building blocks for the capsid. Interacts with capsid protein VP2, capsid protein VP3 and capsid protein VP4 following cleavage of capsid protein VP0. As to quaternary structure, interacts with capsid protein VP1 and capsid protein VP3 in the mature capsid. In terms of assembly, interacts with capsid protein VP0 and capsid protein VP1 to form heterotrimeric protomers. Five protomers subsequently associate to form pentamers which serve as building blocks for the capsid. Interacts with capsid protein VP4 in the mature capsid. Interacts with protein 2C; this interaction may be important for virion morphogenesis. Interacts with capsid protein VP1 and capsid protein VP3. As to quaternary structure, homodimer. In terms of assembly, homohexamer; forms a hexameric ring structure with 6-fold symmetry characteristic of AAA+ ATPases. Interacts (via N-terminus) with host RTN3 (via reticulon domain); this interaction is important for viral replication. Interacts with capsid protein VP3; this interaction may be important for virion morphogenesis. Interacts with protein 3CD. As to quaternary structure, homodimer. Interacts with host GBF1. Interacts (via GOLD domain) with host ACBD3 (via GOLD domain); this interaction allows the formation of a viral protein 3A/ACBD3 heterotetramer with a 2:2 stoichiometry, which will stimulate the recruitment of host PI4KB in order to synthesize PI4P at the viral RNA replication sites. In terms of assembly, interacts with RNA-directed RNA polymerase. Interacts with protein 3AB and with RNA-directed RNA polymerase. As to quaternary structure, interacts with Viral protein genome-linked and with protein 3CD. Mg(2+) serves as cofactor. Post-translationally, specific enzymatic cleavages in vivo by the viral proteases yield processing intermediates and the mature proteins. In terms of processing, myristoylation is required for the formation of pentamers during virus assembly. Further assembly of 12 pentamers and a molecule of genomic RNA generates the provirion. During virion maturation, immature virions are rendered infectious following cleavage of VP0 into VP4 and VP2. This maturation seems to be an autocatalytic event triggered by the presence of RNA in the capsid and it is followed by a conformational change infectious virion. Post-translationally, myristoylation is required during RNA encapsidation and formation of the mature virus particle. In terms of processing, VPg is uridylylated by the polymerase into VPg-pUpU. This acts as a nucleotide-peptide primer for the genomic RNA replication.

Its subcellular location is the virion. The protein resides in the host cytoplasm. It is found in the host cytoplasmic vesicle membrane. The protein localises to the host nucleus. It catalyses the reaction a ribonucleoside 5'-triphosphate + H2O = a ribonucleoside 5'-diphosphate + phosphate + H(+). It carries out the reaction Selective cleavage of Tyr-|-Gly bond in the picornavirus polyprotein.. The enzyme catalyses RNA(n) + a ribonucleoside 5'-triphosphate = RNA(n+1) + diphosphate. The catalysed reaction is Selective cleavage of Gln-|-Gly bond in the poliovirus polyprotein. In other picornavirus reactions Glu may be substituted for Gln, and Ser or Thr for Gly.. Replication or transcription is subject to high level of random mutations by the nucleotide analog ribavirin. Forms an icosahedral capsid of pseudo T=3 symmetry with capsid proteins VP2 and VP3. The capsid is 300 Angstroms in diameter, composed of 60 copies of each capsid protein and enclosing the viral positive strand RNA genome. Capsid protein VP1 mainly forms the vertices of the capsid. Capsid protein VP1 interacts with host cell receptor to provide virion attachment to target host cells. This attachment induces virion internalization. Tyrosine kinases are probably involved in the entry process. After binding to its receptor, the capsid undergoes conformational changes. Capsid protein VP1 N-terminus (that contains an amphipathic alpha-helix) and capsid protein VP4 are externalized. Together, they shape a pore in the host membrane through which viral genome is translocated to host cell cytoplasm. In terms of biological role, forms an icosahedral capsid of pseudo T=3 symmetry with capsid proteins VP2 and VP3. The capsid is 300 Angstroms in diameter, composed of 60 copies of each capsid protein and enclosing the viral positive strand RNA genome. Functionally, lies on the inner surface of the capsid shell. After binding to the host receptor, the capsid undergoes conformational changes. Capsid protein VP4 is released, Capsid protein VP1 N-terminus is externalized, and together, they shape a pore in the host membrane through which the viral genome is translocated into the host cell cytoplasm. Its function is as follows. Component of immature procapsids, which is cleaved into capsid proteins VP4 and VP2 after maturation. Allows the capsid to remain inactive before the maturation step. Cysteine protease that cleaves viral polyprotein and specific host proteins. It is responsible for the autocatalytic cleavage between the P1 and P2 regions, which is the first cleavage occurring in the polyprotein. Also cleaves the host translation initiation factor EIF4G1, in order to shut down the capped cellular mRNA translation. Inhibits the host nucleus-cytoplasm protein and RNA trafficking by cleaving host members of the nuclear pores. Counteracts stress granule formation probably by antagonizing its assembly or promoting its dissassembly. In terms of biological role, plays an essential role in the virus replication cycle by acting as a viroporin. Creates a pore in the host endoplasmic reticulum and as a consequence releases Ca2+ in the cytoplasm of infected cell. In turn, high levels of cytoplasmic calcium may trigger membrane trafficking and transport of viral ER-associated proteins to viroplasms, sites of viral genome replication. Functionally, induces and associates with structural rearrangements of intracellular membranes. Displays RNA-binding, nucleotide binding and NTPase activities. May play a role in virion morphogenesis and viral RNA encapsidation by interacting with the capsid protein VP3. Its function is as follows. Localizes the viral replication complex to the surface of membranous vesicles. Together with protein 3CD binds the Cis-Active RNA Element (CRE) which is involved in RNA synthesis initiation. Acts as a cofactor to stimulate the activity of 3D polymerase, maybe through a nucleid acid chaperone activity. Localizes the viral replication complex to the surface of membranous vesicles. It inhibits host cell endoplasmic reticulum-to-Golgi apparatus transport and causes the disassembly of the Golgi complex, possibly through GBF1 interaction. This would result in depletion of MHC, trail receptors and IFN receptors at the host cell surface. Plays an essential role in viral RNA replication by recruiting ACBD3 and PI4KB at the viral replication sites, thereby allowing the formation of the rearranged membranous structures where viral replication takes place. In terms of biological role, acts as a primer for viral RNA replication and remains covalently bound to viral genomic RNA. VPg is uridylylated prior to priming replication into VPg-pUpU. The oriI viral genomic sequence may act as a template for this. The VPg-pUpU is then used as primer on the genomic RNA poly(A) by the RNA-dependent RNA polymerase to replicate the viral genome. During genome replication, the VPg-RNA linkage is removed by the host TDP2, thereby accelerating replication. During the late stage of the replication cycle, host TDP2 is excluded from sites of viral RNA synthesis and encapsidation, allowing for the generation of progeny virions. Functionally, involved in the viral replication complex and viral polypeptide maturation. It exhibits protease activity with a specificity and catalytic efficiency that is different from protease 3C. Protein 3CD lacks polymerase activity. The 3C domain in the context of protein 3CD may have an RNA binding activity. Protein 3CD binds to the 5'UTR of the viral genome. Its function is as follows. Replicates the viral genomic RNA on the surface of intracellular membranes. May form linear arrays of subunits that propagate along a strong head-to-tail interaction called interface-I. Covalently attaches UMP to a tyrosine of VPg, which is used to prime RNA synthesis. The positive stranded RNA genome is first replicated at virus induced membranous vesicles, creating a dsRNA genomic replication form. This dsRNA is then used as template to synthesize positive stranded RNA genomes. ss(+)RNA genomes are either translated, replicated or encapsidated. Major viral protease that mediates proteolytic processing of the polyprotein. Cleaves host EIF5B, contributing to host translation shutoff. Also cleaves host PABPC1, contributing to host translation shutoff. Cleaves host NLRP1, triggers host N-glycine-mediated degradation of the autoinhibitory NLRP1 N-terminal fragment. The protein is Genome polyprotein of Echovirus 11 (strain Gregory).